Here is a 525-residue protein sequence, read N- to C-terminus: Cytochrome P450 CYP72A613 (525 aa).

Residues 2 to 22 (VFLFPTGTIIIWVLTILLAVI) form a helical membrane-spanning segment. Residue C473 coordinates heme.

The protein belongs to the cytochrome P450 family. As to expression, mainly expressed in leaves and seed pods and, to a lower extent, in flowers and stems.

It localises to the membrane. It participates in steroid metabolism; cholesterol metabolism. In terms of biological role, involved in the biosynthesis of spiroketal steroid and saponin natural products from cholesterol such as diosgenin and analogs (e.g. furostanol and spirostanol), plant defense compounds used as main precursors for the industrial production of steroid hormones. During the 5,6-spiroketalization of cholesterol, may catalyze the 27-monohydroxylation of furostanol-type steroid to an intermediate product that undergoes a stereospecific formation of the terminal heterocycle to yield diosgenin. In Trigonella foenum-graecum (Fenugreek), this protein is Cytochrome P450 CYP72A613.